The sequence spans 387 residues: Zn(2)-C6 fungal-type trascription factor aoiH (387 aa).

The segment at residues 21-48 is a DNA-binding region (zn(2)-C6 fungal-type); that stretch reads CDFCALSKVKCDRGQPQCVRCIKSGIDC. Residues 68–87 show a composition bias toward polar residues; it reads VRSTSATTQGTRRKQQTIAQ. The tract at residues 68–94 is disordered; that stretch reads VRSTSATTQGTRRKQQTIAQHSPRRRI.

The protein resides in the nucleus. In terms of biological role, transcription factor; part of the gene cluster that mediates the biosynthesis of a methylated derivative of known natural products orthosporin and diaporthin. Positively regultaes the expression of the non-reducing polyketide synthase aoiG and the O-methyltransferase aoiO. The chain is Zn(2)-C6 fungal-type trascription factor aoiH from Aspergillus oryzae (strain ATCC 42149 / RIB 40) (Yellow koji mold).